Reading from the N-terminus, the 205-residue chain is Small ribosomal subunit protein uS4 (205 aa).

The tract at residues Arg14–Gly49 is disordered. The S4 RNA-binding domain occupies Ser94 to Val157.

The protein belongs to the universal ribosomal protein uS4 family. In terms of assembly, part of the 30S ribosomal subunit. Contacts protein S5. The interaction surface between S4 and S5 is involved in control of translational fidelity.

Its function is as follows. One of the primary rRNA binding proteins, it binds directly to 16S rRNA where it nucleates assembly of the body of the 30S subunit. Functionally, with S5 and S12 plays an important role in translational accuracy. The sequence is that of Small ribosomal subunit protein uS4 from Agrobacterium fabrum (strain C58 / ATCC 33970) (Agrobacterium tumefaciens (strain C58)).